A 699-amino-acid chain; its full sequence is Dymeclin (699 aa).

Glycine 2 carries the N-myristoyl glycine lipid modification. Serine 346 bears the Phosphoserine mark.

This sequence belongs to the dymeclin family.

The polypeptide is Dymeclin (Drosophila melanogaster (Fruit fly)).